Consider the following 88-residue polypeptide: Small ribosomal subunit protein uS17 (88 aa).

Belongs to the universal ribosomal protein uS17 family. In terms of assembly, part of the 30S ribosomal subunit.

In terms of biological role, one of the primary rRNA binding proteins, it binds specifically to the 5'-end of 16S ribosomal RNA. The polypeptide is Small ribosomal subunit protein uS17 (Prochlorococcus marinus (strain MIT 9215)).